The sequence spans 648 residues: A-type voltage-gated potassium channel KCND1 (648 aa).

Residues 1–183 lie on the Cytoplasmic side of the membrane; that stretch reads MAAGVATWLP…RAFENPHTST (183 aa). Residues 2–20 form an interaction with KCNIP1, KCNIP2, and other family members region; the sequence is AAGVATWLPFARAAAVGWL. Residues 2–20 are interaction with KCNIP2; it reads AAGVATWLPFARAAAVGWL. Residues His104, Cys131, and Cys132 each contribute to the Zn(2+) site. Positions 144–164 are disordered; that stretch reads AERLAEDEEAEQAGDGPTLPA. The helical transmembrane segment at 184–205 threads the bilayer; it reads AALVFYYVTGFFIAVSVIANVV. The Extracellular portion of the chain corresponds to 206–230; that stretch reads ETIPCRSPTRRPPREQPCGDRFPLA. Residues 231–252 traverse the membrane as a helical segment; the sequence is FFCMDTACVLIFTGEYLLRLFA. Topologically, residues 253 to 263 are cytoplasmic; sequence APSRCRFLRSV. Residues 264–284 form a helical membrane-spanning segment; the sequence is MSLIDVVAILPYYIGLFMPKN. Residues 285–287 lie on the Extracellular side of the membrane; it reads EDV. The helical; Voltage-sensor transmembrane segment at 288 to 308 threads the bilayer; it reads SGAFVTLRVFRVFRIFKFSRH. Residues 309-323 lie on the Cytoplasmic side of the membrane; it reads SQGLRILGYTLKSCA. Positions 310-323 are S4-S5 linker; it reads QGLRILGYTLKSCA. A helical membrane pass occupies residues 324–345; that stretch reads SELGFLLFSLTMAIIIFATVMF. The Extracellular segment spans residues 346–359; sequence YAEKGTNKTNFTSI. N-linked (GlcNAc...) asparagine glycosylation is found at Asn352 and Asn355. The segment at residues 360–371 is an intramembrane region (helical); the sequence is PAAFWYTIVTMT. Residues 372–377 carry the Selectivity filter motif; it reads TLGYGD. Residues 372–379 lie within the membrane without spanning it; the sequence is TLGYGDMV. At 380-386 the chain is on the extracellular side; it reads PSTIAGK. A helical membrane pass occupies residues 387–415; it reads IFGSICSLSGVLVIALPVPVIVSNFSRIY. Residues 416 to 648 lie on the Cytoplasmic side of the membrane; the sequence is HQNQRADKRR…LPETVKISSL (233 aa). A Phosphoserine modification is found at Ser458. The segment at 474-489 is mediates dendritic targeting; sequence FEQQHHHLLHCLEKTT. The segment at 474-489 is required for dendritic targeting; the sequence is FEQQHHHLLHCLEKTT. Phosphoserine is present on Ser555. The disordered stretch occupies residues 601-636; it reads IPTPPANTPDESQPSSPGGGGGGASSTLRNSSLGTP.

Belongs to the potassium channel family. D (Shal) (TC 1.A.1.2) subfamily. Kv4.1/KCND1 sub-subfamily. As to quaternary structure, component of heteromultimeric potassium channels. Identified in potassium channel complexes containing KCND1, KCND2, KCND3, KCNIP1, KCNIP2, KCNIP3, KCNIP4, DPP6 and DPP10.

It localises to the cell membrane. The enzyme catalyses K(+)(in) = K(+)(out). In terms of biological role, A-type voltage-gated potassium channel that mediates transmembrane potassium transport in excitable membranes in the brain. Mediates A-type current I(SA) in suprachiasmatic nucleus (SCN) neurons. Exhibits a low-threshold A-type current with a hyperpolarized steady-state inactivation midpoint and the recovery process was steeply voltage-dependent, with recovery being markedly faster at more negative potentials. May regulates repetitive firing rates in the suprachiasmatic nucleus (SCN) neurons and circadian rhythms in neuronal excitability and behavior. Contributes to the regulation of the circadian rhythm of action potential firing in suprachiasmatic nucleus neurons, which regulates the circadian rhythm of locomotor activity. The regulatory subunit KCNIP1 modulates the kinetics of channel inactivation, increases the current amplitudes and accelerates recovery from inactivation, shifts activation in a depolarizing direction. The regulatory subunit DPP10 decreases the voltage sensitivity of the inactivation channel gating. The chain is A-type voltage-gated potassium channel KCND1 from Bos taurus (Bovine).